The primary structure comprises 87 residues: DNA-directed RNA polymerase subunit omega (87 aa).

The protein belongs to the RNA polymerase subunit omega family. As to quaternary structure, the RNAP catalytic core consists of 2 alpha, 1 beta, 1 beta' and 1 omega subunit. When a sigma factor is associated with the core the holoenzyme is formed, which can initiate transcription.

The catalysed reaction is RNA(n) + a ribonucleoside 5'-triphosphate = RNA(n+1) + diphosphate. Functionally, promotes RNA polymerase assembly. Latches the N- and C-terminal regions of the beta' subunit thereby facilitating its interaction with the beta and alpha subunits. In Pseudomonas fluorescens (strain ATCC BAA-477 / NRRL B-23932 / Pf-5), this protein is DNA-directed RNA polymerase subunit omega.